The primary structure comprises 175 residues: Adenine phosphoribosyltransferase (175 aa).

The protein belongs to the purine/pyrimidine phosphoribosyltransferase family. Homodimer.

The protein localises to the cytoplasm. The enzyme catalyses AMP + diphosphate = 5-phospho-alpha-D-ribose 1-diphosphate + adenine. The protein operates within purine metabolism; AMP biosynthesis via salvage pathway; AMP from adenine: step 1/1. In terms of biological role, catalyzes a salvage reaction resulting in the formation of AMP, that is energically less costly than de novo synthesis. The chain is Adenine phosphoribosyltransferase from Clavibacter michiganensis subsp. michiganensis (strain NCPPB 382).